The primary structure comprises 535 residues: Peptide chain release factor 3 (535 aa).

The tr-type G domain occupies 8-277; it reads KRRRTFAIIS…TLVDLAPPPG (270 aa). Residues 17–24, 85–89, and 139–142 each bind GTP; these read SHPDAGKT, DTPGH, and NKLD.

Belongs to the TRAFAC class translation factor GTPase superfamily. Classic translation factor GTPase family. PrfC subfamily.

It localises to the cytoplasm. In terms of biological role, increases the formation of ribosomal termination complexes and stimulates activities of RF-1 and RF-2. It binds guanine nucleotides and has strong preference for UGA stop codons. It may interact directly with the ribosome. The stimulation of RF-1 and RF-2 is significantly reduced by GTP and GDP, but not by GMP. The sequence is that of Peptide chain release factor 3 from Nitrosomonas eutropha (strain DSM 101675 / C91 / Nm57).